Here is an 852-residue protein sequence, read N- to C-terminus: Bifunctional uridylyltransferase/uridylyl-removing enzyme (852 aa).

Residues 1–318 (MPENLSSALE…STPMRVTLRI (318 aa)) form a uridylyltransferase region. The segment at 319-672 (DDDYIQVNNQ…SRILPQSDSF (354 aa)) is uridylyl-removing. Positions 436–558 (VDDHILAVVR…VQTHERLSAL (123 aa)) constitute an HD domain. 2 ACT domains span residues 673-757 (QVMV…SCNR) and 785-852 (SVEI…EQLA).

The protein belongs to the GlnD family. Mg(2+) is required as a cofactor.

The enzyme catalyses [protein-PII]-L-tyrosine + UTP = [protein-PII]-uridylyl-L-tyrosine + diphosphate. It catalyses the reaction [protein-PII]-uridylyl-L-tyrosine + H2O = [protein-PII]-L-tyrosine + UMP + H(+). With respect to regulation, uridylyltransferase (UTase) activity is inhibited by glutamine, while glutamine activates uridylyl-removing (UR) activity. Functionally, modifies, by uridylylation and deuridylylation, the PII regulatory proteins (GlnB and homologs), in response to the nitrogen status of the cell that GlnD senses through the glutamine level. Under low glutamine levels, catalyzes the conversion of the PII proteins and UTP to PII-UMP and PPi, while under higher glutamine levels, GlnD hydrolyzes PII-UMP to PII and UMP (deuridylylation). Thus, controls uridylylation state and activity of the PII proteins, and plays an important role in the regulation of nitrogen assimilation and metabolism. This is Bifunctional uridylyltransferase/uridylyl-removing enzyme from Neisseria gonorrhoeae (strain NCCP11945).